The sequence spans 223 residues: Ribosome assembly factor mrt4 (223 aa).

The protein belongs to the universal ribosomal protein uL10 family. In terms of assembly, associates with the pre-60S ribosomal particle.

Its subcellular location is the nucleus. It localises to the nucleolus. It is found in the cytoplasm. In terms of biological role, component of the ribosome assembly machinery. Nuclear paralog of the ribosomal protein P0, it binds pre-60S subunits at an early stage of assembly in the nucleolus, and is replaced by P0 in cytoplasmic pre-60S subunits and mature 80S ribosomes. The sequence is that of Ribosome assembly factor mrt4 from Dictyostelium discoideum (Social amoeba).